A 229-amino-acid chain; its full sequence is Large ribosomal subunit protein uL1 (229 aa).

The protein belongs to the universal ribosomal protein uL1 family. As to quaternary structure, part of the 50S ribosomal subunit.

Functionally, binds directly to 23S rRNA. The L1 stalk is quite mobile in the ribosome, and is involved in E site tRNA release. Protein L1 is also a translational repressor protein, it controls the translation of the L11 operon by binding to its mRNA. This chain is Large ribosomal subunit protein uL1, found in Lactococcus lactis subsp. lactis (strain IL1403) (Streptococcus lactis).